The primary structure comprises 160 residues: N-acetyltransferase Pat (160 aa).

The N-acetyltransferase domain occupies 5–148 (IKIRKATKED…VYGEMRLTER (144 aa)). CoA-binding residues include L79, V81, T87, G89, G91, T92, N118, K123, and K127.

The protein belongs to the acetyltransferase family. GNAT subfamily.

It carries out the reaction L-lysyl-[protein] + acetyl-CoA = N(6)-acetyl-L-lysyl-[protein] + CoA + H(+). Functionally, modulates activity of albA1, the major archaeal DNA compaction protein, by decreasing albA1's nucleic acid binding affinity through acetylation of 'Lys-16'. The protein is N-acetyltransferase Pat of Saccharolobus solfataricus (strain ATCC 35092 / DSM 1617 / JCM 11322 / P2) (Sulfolobus solfataricus).